Consider the following 370-residue polypeptide: Quinolinate synthase (370 aa).

Iminosuccinate contacts are provided by His-62 and Ser-83. Residue Cys-128 participates in [4Fe-4S] cluster binding. Iminosuccinate is bound by residues 154–156 and Ser-171; that span reads YAN. Cys-215 serves as a coordination point for [4Fe-4S] cluster. Residues 241–243 and Thr-258 contribute to the iminosuccinate site; that span reads HPE. [4Fe-4S] cluster is bound at residue Cys-312.

It belongs to the quinolinate synthase family. Type 1 subfamily. The cofactor is [4Fe-4S] cluster.

It localises to the cytoplasm. The enzyme catalyses iminosuccinate + dihydroxyacetone phosphate = quinolinate + phosphate + 2 H2O + H(+). Its pathway is cofactor biosynthesis; NAD(+) biosynthesis; quinolinate from iminoaspartate: step 1/1. Catalyzes the condensation of iminoaspartate with dihydroxyacetone phosphate to form quinolinate. The protein is Quinolinate synthase of Neisseria meningitidis serogroup C (strain 053442).